Here is a 383-residue protein sequence, read N- to C-terminus: 8-amino-7-oxononanoate synthase (383 aa).

Substrate-binding residues include Arg-27 and Arg-34. 114 to 115 contributes to the pyridoxal 5'-phosphate binding site; sequence GY. Position 139 (His-139) interacts with substrate. Pyridoxal 5'-phosphate contacts are provided by residues Ser-187, 212–215, and 232–235; these read DDAH and TLSK. Lys-235 carries the post-translational modification N6-(pyridoxal phosphate)lysine. Residue Thr-344 participates in substrate binding.

This sequence belongs to the class-II pyridoxal-phosphate-dependent aminotransferase family. BioF subfamily. As to quaternary structure, homodimer. Requires pyridoxal 5'-phosphate as cofactor.

It catalyses the reaction 6-carboxyhexanoyl-[ACP] + L-alanine + H(+) = (8S)-8-amino-7-oxononanoate + holo-[ACP] + CO2. The protein operates within cofactor biosynthesis; biotin biosynthesis. Functionally, catalyzes the decarboxylative condensation of pimeloyl-[acyl-carrier protein] and L-alanine to produce 8-amino-7-oxononanoate (AON), [acyl-carrier protein], and carbon dioxide. The chain is 8-amino-7-oxononanoate synthase from Methylorubrum extorquens (strain PA1) (Methylobacterium extorquens).